The primary structure comprises 448 residues: uncharacterized protein (448 aa).

Residue 257 to 264 participates in ATP binding; sequence GRNAQGKT.

This is an uncharacterized protein from Methanocaldococcus jannaschii (strain ATCC 43067 / DSM 2661 / JAL-1 / JCM 10045 / NBRC 100440) (Methanococcus jannaschii).